The primary structure comprises 321 residues: Nucleus-vacuole junction protein 1 (321 aa).

The signal sequence occupies residues 1–22 (MTRPPLVRGIFSLGLSVAVLKG). Residues 73–125 (ELSWRKVFNFISRQSSELDARIYVLILLLSFLLPIAWTVLDGDRETTLEDKDN) are TSC13-binding. Residues 94 to 114 (IYVLILLLSFLLPIAWTVLDG) form a helical membrane-spanning segment. The tract at residues 139–195 (KHYNDGERAVLQFGKNRSEPIILSYKDMNVLEGEHEFTSKEEHSNSHLTSKSENALS) is OSH1-binding. S156 is subject to Phosphoserine. The span at 174–183 (EFTSKEEHSN) shows a compositional bias: basic and acidic residues. Residues 174-194 (EFTSKEEHSNSHLTSKSENAL) are disordered. Over residues 184–194 (SHLTSKSENAL) the composition is skewed to polar residues. S199 carries the phosphoserine modification. Residues 210–275 (QLEEDKNEPN…SLKSSTSFPI (66 aa)) form a disordered region. The segment at 233 to 321 (DCSSSSEVES…EQAYSQPFRY (89 aa)) is VAC8-binding. Residues 242–262 (SQSKCRKESTAEPDSLSRDTR) are compositionally biased toward basic and acidic residues. Over residues 263 to 272 (TTSSLKSSTS) the composition is skewed to low complexity. S285 and S298 each carry phosphoserine. The interval 299 to 321 (PTKSSNLDAQVNTEQAYSQPFRY) is disordered.

In terms of assembly, interacts with OSH1, TSC13 and VAC8.

The protein resides in the nucleus outer membrane. In terms of biological role, involved in the formation of nucleus-vacuole (NV) junctions during piecemeal microautophagy of the nucleus (PMN). NV junctions are interorganelle interfaces mediated by NVJ1 in the nuclear envelope and VAC8 on the vacuole membrane. Together, NVJ1 and VAC8 form Velcro-like patches through which teardrop-like portions of the nucleus are pinched off into the vacuolar lumen and degraded by the PMN process. Also acts as an outer-nuclear membrane receptor for OSH1 and TSC13. In Saccharomyces cerevisiae (strain YJM789) (Baker's yeast), this protein is Nucleus-vacuole junction protein 1 (NVJ1).